The chain runs to 787 residues: MSFATSLPRPTTTGAAGFGLPLATCISLSVSHSFSPKFGICNNTSLRLKSKAGSGCYEGIHRSQLAASTILEGHTPINPEVESEKIRLIERIRLMFRSMDDGEISVSPYDTAWVALVEDIGGSGGPQFPTSLEWISNNQLDDGSWGDRKFVLYDRILNTLACVVALTTWKMHPNKCEKGLRFISDNIEKLADEDEELMPVGFEIALPSLIDLAKRLCIEIPDNSASIKNIYAKRDSKLKRIPMDLMHKKPTSLLFSLEGMEGLNWDKLLDFQSEGSFLSSPSSTAYALHHTKDELCLEYLLKAVKKFNGGVPNAYPVDMFEHLWSVDRLRRLGISRYFQVEIDECLDYVYRYWTNKGICWARNMCVQDSDDSSMGFRLLRLYGYDVSIDVFKQFEEGGQFCSIPGQMTHAITGMYNLYRASQLMFPQEHILADARNFTANLLHQKRVTNSIVDKWIITKDLPGEVAYALDVPFYASLPRLEARFFLEQYGGDDDVWIGKTLYRMLYVNCNTYLELAKLDYKHCQTVHQLEWNSMQTWYRECNLGEFGLSERSLLLAYYIAASTAFEPEKSSERLAWAITTILVETIMSQELSDEQKREFVDEFVNISIINNQNGGRYKPGNRLVEVLINTVTLMAEGRGTDQQLSNAWKNWLKTWEEGGDLGEAEARLLLHTIHLSSGLDESSFSHPKYQQLLEATSKVCHQLRLFQNLKANDAQGSTSRLVTVTTFQIEAGMQELVKLIFTKTLEDLTSATKQSFFNIARSFYYTAYCPADTIDSHINKVLFEKIV.

The transit peptide at Met-1–Arg-47 directs the protein to the chloroplast. Lys-237 contributes to the substrate binding site. Mg(2+) contacts are provided by Asp-368 and Asp-370. The short motif at Asp-368 to Asp-371 is the DXDD motif element. Position 454 (Lys-454) interacts with substrate.

It belongs to the terpene synthase family. Tpsc subfamily. Mg(2+) is required as a cofactor. As to expression, expressed in peltate glandular trichomes of leaves. Highly expressed in the first leaf pair.

Its subcellular location is the plastid. The protein resides in the chloroplast. It catalyses the reaction (2E,6E,10E)-geranylgeranyl diphosphate = (-)-kolavenyl diphosphate. Inhibited by high concentrations of magnesium. Its function is as follows. Involved in the biosynthesis of clerodane diterpenoids natural products, including salvinorin A with potent agonistic activity on brain kappa-opioid receptors, thus conferring hallucinogenic properties. Diterpene synthase that catalyzes the formation of (-)-kolavenyl diphosphate from geranylgeranyl diphosphate (GGPP) as the first reaction in salvinorin A biosynthesis. This is (-)-kolavenyl diphosphate synthase, chloroplastic from Salvia divinorum (Maria pastora).